Reading from the N-terminus, the 310-residue chain is Beta-ketoacyl-[acyl-carrier-protein] synthase III 1 (310 aa).

Catalysis depends on residues Cys112 and His235. The ACP-binding stretch occupies residues 236–240; that stretch reads QANIR. Asn265 is an active-site residue.

It belongs to the thiolase-like superfamily. FabH family. In terms of assembly, homodimer.

The protein resides in the cytoplasm. The catalysed reaction is malonyl-[ACP] + acetyl-CoA + H(+) = 3-oxobutanoyl-[ACP] + CO2 + CoA. It participates in lipid metabolism; fatty acid biosynthesis. Its function is as follows. Catalyzes the condensation reaction of fatty acid synthesis by the addition to an acyl acceptor of two carbons from malonyl-ACP. Catalyzes the first condensation reaction which initiates fatty acid synthesis and may therefore play a role in governing the total rate of fatty acid production. Possesses both acetoacetyl-ACP synthase and acetyl transacylase activities. Its substrate specificity determines the biosynthesis of branched-chain and/or straight-chain of fatty acids. The sequence is that of Beta-ketoacyl-[acyl-carrier-protein] synthase III 1 from Bacillus cereus (strain ATCC 14579 / DSM 31 / CCUG 7414 / JCM 2152 / NBRC 15305 / NCIMB 9373 / NCTC 2599 / NRRL B-3711).